The primary structure comprises 240 residues: Thiamine-phosphate synthase (240 aa).

4-amino-2-methyl-5-(diphosphooxymethyl)pyrimidine-binding positions include 63 to 67 and asparagine 94; that span reads QYREK. Residues aspartate 95 and aspartate 114 each contribute to the Mg(2+) site. Threonine 133 contributes to the 4-amino-2-methyl-5-(diphosphooxymethyl)pyrimidine binding site. 159–161 lines the 2-[(2R,5Z)-2-carboxy-4-methylthiazol-5(2H)-ylidene]ethyl phosphate pocket; that stretch reads TFT. Residue lysine 162 participates in 4-amino-2-methyl-5-(diphosphooxymethyl)pyrimidine binding. Residues glycine 190 and 210 to 211 contribute to the 2-[(2R,5Z)-2-carboxy-4-methylthiazol-5(2H)-ylidene]ethyl phosphate site; that span reads IS.

This sequence belongs to the thiamine-phosphate synthase family. Mg(2+) is required as a cofactor.

It carries out the reaction 2-[(2R,5Z)-2-carboxy-4-methylthiazol-5(2H)-ylidene]ethyl phosphate + 4-amino-2-methyl-5-(diphosphooxymethyl)pyrimidine + 2 H(+) = thiamine phosphate + CO2 + diphosphate. The catalysed reaction is 2-(2-carboxy-4-methylthiazol-5-yl)ethyl phosphate + 4-amino-2-methyl-5-(diphosphooxymethyl)pyrimidine + 2 H(+) = thiamine phosphate + CO2 + diphosphate. The enzyme catalyses 4-methyl-5-(2-phosphooxyethyl)-thiazole + 4-amino-2-methyl-5-(diphosphooxymethyl)pyrimidine + H(+) = thiamine phosphate + diphosphate. It functions in the pathway cofactor biosynthesis; thiamine diphosphate biosynthesis; thiamine phosphate from 4-amino-2-methyl-5-diphosphomethylpyrimidine and 4-methyl-5-(2-phosphoethyl)-thiazole: step 1/1. Its function is as follows. Condenses 4-methyl-5-(beta-hydroxyethyl)thiazole monophosphate (THZ-P) and 2-methyl-4-amino-5-hydroxymethyl pyrimidine pyrophosphate (HMP-PP) to form thiamine monophosphate (TMP). The chain is Thiamine-phosphate synthase from Methanosarcina mazei (strain ATCC BAA-159 / DSM 3647 / Goe1 / Go1 / JCM 11833 / OCM 88) (Methanosarcina frisia).